The chain runs to 73 residues: Large ribosomal subunit protein bL28 (73 aa).

The protein belongs to the bacterial ribosomal protein bL28 family.

The polypeptide is Large ribosomal subunit protein bL28 (Buchnera aphidicola subsp. Cinara cedri (strain Cc)).